The chain runs to 36 residues: Photosystem I reaction center subunit VIII (36 aa).

Residues 6 to 28 (FPSVLVPLVGLVFPAMAMASLSL) traverse the membrane as a helical segment.

This sequence belongs to the PsaI family.

The protein resides in the plastid. It is found in the chloroplast thylakoid membrane. In terms of biological role, may help in the organization of the PsaL subunit. The polypeptide is Photosystem I reaction center subunit VIII (Panax ginseng (Korean ginseng)).